We begin with the raw amino-acid sequence, 760 residues long: Cyclin-D-binding Myb-like transcription factor 1 (760 aa).

The interaction with CCND2 stretch occupies residues 1 to 237 (MSTVEEDSDT…TPEEIEKLKE (237 aa)). Residues 24-63 (DTDGNLILHCPQNDPDEIDSEDSTEPPHKRLCLSSEDDQS) form a disordered region. The segment covering 37 to 47 (DPDEIDSEDST) has biased composition (acidic residues). The segment at 87-170 (VTMTATTEVA…IDILMNNIER (84 aa)) is required for transcriptional activation. Positions 87-458 (VTMTATTEVA…DNTAISPSPM (372 aa)) are required for DNA-binding. The tract at residues 176–690 (GIKDATEIIF…PTIVHQVHQT (515 aa)) is interaction with CCND1, CCND2 and CCND3. Residues 225–263 (GKYTPEEIEKLKELRIKHGNDWATIGAALGRSASSVKDR) form the Myb-like 1 domain. Positions 268 to 333 (KDTCNTGKWT…KWLNYLNWKQ (66 aa)) constitute an HTH myb-type domain. The segment at residues 306–329 (WAAVAERVGTRSEKQCRSKWLNYL) is a DNA-binding region (H-T-H motif). The 50-residue stretch at 339 to 388 (WTKEDEINLILRIAELDVADENDINWDLLAEGWSSVRSPQWLRSKWWTIK) folds into the Myb-like 2 domain. A required for transcriptional activation region spans residues 459–760 (AALQIPVQIT…KDVEDLVNCH (302 aa)). Disordered regions lie at residues 593 to 614 (DSDL…DTFP) and 738 to 760 (IGSS…VNCH).

This sequence belongs to the DMTF1 family. As to quaternary structure, interacts with the D-type cyclins CCND1, CCND2 and CCND3. Interaction with D-type cyclins may modulate transcriptional activation by this protein. In terms of processing, phosphorylated by the cyclin-D2/CDK4, cyclin-D3/CDK4 and cyclin-D2/CDK6 complexes and to a lesser extent by the cyclin-D1/CDK4 complex.

Its subcellular location is the nucleus. Functionally, transcriptional activator which activates the CDKN2A/ARF locus in response to Ras-Raf signaling, thereby promoting p53/TP53-dependent growth arrest. Binds to the consensus sequence 5'-CCCG[GT]ATGT-3'. The chain is Cyclin-D-binding Myb-like transcription factor 1 (Dmtf1) from Rattus norvegicus (Rat).